The following is a 1826-amino-acid chain: Transcription initiation factor TFIID subunit 1-like (1826 aa).

Disordered stretches follow at residues Asp-118 to Asp-141, Ile-532 to Lys-555, and Arg-1252 to Arg-1276. The span at Arg-1252–Lys-1268 shows a compositional bias: basic and acidic residues. The Nuclear localization signal signature appears at Pro-1370–Val-1377. Bromo domains lie at Arg-1395–Lys-1503 and Leu-1517–Tyr-1626. Residues Ala-1648–Lys-1826 form a disordered region. The span at Pro-1660 to Pro-1700 shows a compositional bias: polar residues. Acidic residues-rich tracts occupy residues Glu-1714–Asp-1729, Gly-1740–Gly-1750, and Glu-1768–Asp-1783. Over residues Ser-1787–Asp-1797 the composition is skewed to polar residues. Residues Ser-1817–Lys-1826 show a composition bias toward basic and acidic residues.

The protein belongs to the TAF1 family. As to quaternary structure, can bind directly to TATA-box binding protein (TBP). Interacts (via bromo domains) with acetylated lysine residues on the N-terminus of histone H1.4, H2A, H2B, H3 and H4 (in vitro). Testis specific, expressed apparently in germ cells.

It is found in the nucleus. In terms of biological role, may act as a functional substitute for TAF1/TAFII250 during male meiosis, when sex chromosomes are transcriptionally silenced. In Homo sapiens (Human), this protein is Transcription initiation factor TFIID subunit 1-like (TAF1L).